The following is a 95-amino-acid chain: Small ribosomal subunit protein bS6 (95 aa).

The protein belongs to the bacterial ribosomal protein bS6 family.

Binds together with bS18 to 16S ribosomal RNA. This chain is Small ribosomal subunit protein bS6, found in Onion yellows phytoplasma (strain OY-M).